The following is a 488-amino-acid chain: Inosine-5'-monophosphate dehydrogenase (488 aa).

CBS domains lie at 95 to 153 (VITN…SMKI) and 157 to 214 (MTKE…PNSS). NAD(+) is bound by residues Asp-251 and 301-303 (GIG). The K(+) site is built by Gly-303 and Gly-305. Ser-306 serves as a coordination point for IMP. Cys-308 provides a ligand contact to K(+). Cys-308 (thioimidate intermediate) is an active-site residue. Residues 341 to 343 (DGG), 364 to 365 (GS), and 388 to 392 (YRGMG) contribute to the IMP site. The active-site Proton acceptor is Arg-404. Residue Glu-416 participates in IMP binding. Positions 470, 471, and 472 each coordinate K(+).

This sequence belongs to the IMPDH/GMPR family. Homotetramer. The cofactor is K(+).

The catalysed reaction is IMP + NAD(+) + H2O = XMP + NADH + H(+). The protein operates within purine metabolism; XMP biosynthesis via de novo pathway; XMP from IMP: step 1/1. Its activity is regulated as follows. Mycophenolic acid (MPA) is a non-competitive inhibitor that prevents formation of the closed enzyme conformation by binding to the same site as the amobile flap. In contrast, mizoribine monophosphate (MZP) is a competitive inhibitor that induces the closed conformation. MPA is a potent inhibitor of mammalian IMPDHs but a poor inhibitor of the bacterial enzymes. MZP is a more potent inhibitor of bacterial IMPDH. In terms of biological role, catalyzes the conversion of inosine 5'-phosphate (IMP) to xanthosine 5'-phosphate (XMP), the first committed and rate-limiting step in the de novo synthesis of guanine nucleotides, and therefore plays an important role in the regulation of cell growth. In Bacillus subtilis (strain 168), this protein is Inosine-5'-monophosphate dehydrogenase.